A 233-amino-acid chain; its full sequence is C-type lectin domain-containing protein 87 (233 aa).

The signal sequence occupies residues 1–20 (MRFFRFLVFPVIAGLSSVLA). An N-linked (GlcNAc...) asparagine glycan is attached at Asn26. Residue Ser32 is glycosylated (O-linked (Xyl...) (chondroitin sulfate) serine). Residue Asn81 is glycosylated (N-linked (GlcNAc...) asparagine). Residues 93–223 (FADSCYWIET…CTYLLYSICE (131 aa)) enclose the C-type lectin domain. 2 cysteine pairs are disulfide-bonded: Cys114-Cys222 and Cys193-Cys214. Residue Asn225 is glycosylated (N-linked (GlcNAc...) asparagine).

This chain is C-type lectin domain-containing protein 87, found in Caenorhabditis briggsae.